Here is a 360-residue protein sequence, read N- to C-terminus: NAD(P)H-quinone oxidoreductase subunit 1, chloroplastic (360 aa).

The next 8 helical transmembrane spans lie at 30–50 (FLPI…LVWL), 98–118 (FSIG…VIPF), 127–147 (FNIG…GLLM), 165–185 (AAQS…ISLL), 203–223 (FWGW…ISSL), 248–268 (YSGI…LISS), 297–317 (IFGT…FLFI), and 340–360 (FLLP…VFSL).

Belongs to the complex I subunit 1 family. In terms of assembly, NDH is composed of at least 16 different subunits, 5 of which are encoded in the nucleus.

It localises to the plastid. Its subcellular location is the chloroplast thylakoid membrane. It carries out the reaction a plastoquinone + NADH + (n+1) H(+)(in) = a plastoquinol + NAD(+) + n H(+)(out). It catalyses the reaction a plastoquinone + NADPH + (n+1) H(+)(in) = a plastoquinol + NADP(+) + n H(+)(out). NDH shuttles electrons from NAD(P)H:plastoquinone, via FMN and iron-sulfur (Fe-S) centers, to quinones in the photosynthetic chain and possibly in a chloroplast respiratory chain. The immediate electron acceptor for the enzyme in this species is believed to be plastoquinone. Couples the redox reaction to proton translocation, and thus conserves the redox energy in a proton gradient. This Aethionema grandiflorum (Persian stone-cress) protein is NAD(P)H-quinone oxidoreductase subunit 1, chloroplastic.